The sequence spans 197 residues: uncharacterized protein (197 aa).

A helical membrane pass occupies residues 7–27; that stretch reads PISVGQMVLICIFILIILFVI.

This sequence belongs to the IIV-6 307L family.

The protein resides in the membrane. This is an uncharacterized protein from Acheta domesticus (House cricket).